We begin with the raw amino-acid sequence, 4171 residues long: Cytoplasmic dynein 2 heavy chain 1 (4171 aa).

A stem region spans residues 1-1598 (MSSDSKDQRK…VLRQVSSEFE (1598 aa)). Residue 115–122 (GKELTEGN) participates in ATP binding. Coiled-coil stretches lie at residues 164–203 (ANDYNEAFKQLQLLVETMEERSIDELSELVECFEDTCDEL), 629–693 (KQLE…KEEE), 829–861 (DLEELIEENLKTAADWESQFKILKGKAREAERL), 927–1048 (EIAE…KEKR), and 1354–1383 (SRQSLKKSLEQIVDQLNRCQKALNQFLEQK). AAA regions lie at residues 1599-1823 (YTYE…VLGG), 1883-2100 (EPLG…VRSH), 2184-2432 (VTKE…WVVS), and 2527-2767 (RFAF…PIKY). Residues 1637-1644 (GPAGTGKT), 1921-1928 (GAAGSGKS), 2226-2233 (GTTGCGKQ), and 2565-2572 (GRPGFGRR) contribute to the ATP site. The interval 2776-3064 (QLLGYKRLTL…VDLDREQDTI (289 aa)) is stalk. Coiled-coil stretches lie at residues 2790–2877 (ERLK…KEVQ), 2999–3059 (EKIA…DLDR), and 3308–3336 (ELEERSSSLLRDAELKKLELEGLEQLLLQ). AAA stretches follow at residues 3140–3367 (ASLE…IITK) and 3575–3784 (LMDF…FVEQ).

It belongs to the dynein heavy chain family. The cytoplasmic dynein complex 2 is probably composed by a heavy chain che-3 homodimer and a number of light intermediate chains.

It is found in the cell projection. Its subcellular location is the cilium membrane. The protein resides in the cytoplasm. The protein localises to the cytoskeleton. Functions as a motor for intraflagellar retrograde transport in chemosensory neurons. Functions in cilia biogenesis. This is Cytoplasmic dynein 2 heavy chain 1 from Caenorhabditis elegans.